A 205-amino-acid chain; its full sequence is Outer-membrane lipoprotein LolB (205 aa).

The N-terminal stretch at 1–17 (MFLRHCITFTLIALLAG) is a signal peptide. A lipid anchor (N-palmitoyl cysteine) is attached at cysteine 18. Cysteine 18 carries the S-diacylglycerol cysteine lipid modification.

This sequence belongs to the LolB family. In terms of assembly, monomer.

It is found in the cell outer membrane. Its function is as follows. Plays a critical role in the incorporation of lipoproteins in the outer membrane after they are released by the LolA protein. The sequence is that of Outer-membrane lipoprotein LolB from Pseudomonas putida (strain ATCC 47054 / DSM 6125 / CFBP 8728 / NCIMB 11950 / KT2440).